A 1827-amino-acid polypeptide reads, in one-letter code: MMRNKDKSQEEDSSLHSNASSRSASEEVSGSDSGSQSESEQGSEPGSGHGSESNSSSESSESQSESESESAGSKSQPVLPEAKEKPASKKERIADVKKMWEEYPDVYGVRRSNRSRQEPSRFNVKEEASSGSESGSPKRRGQRQLKKQEKWKQDPSEDEQEQGTSAESEAEQKKGKARRPVPRRTVPKPQVKKQPKIQRGKRKKQESSDDDDDDDEAPKRQTRRRAAKNVSYKEDDDFETDSDDLIEMTGEGGDEQQDNSETIEKVLDSRLGKKGATGASTTVYAVEANGDPSDDFDTEREEGEVQYLIKWKGWSYIHSTWESEDSLQQQKVKGLKKLENFKKKEDEVKQWLGKVSPEDVEYFSCQQELASELNKQYQIVERVIAVKTSKSTLGQTDFPAHSRKPAPSNEPEYLCKWMGLPYSECSWEDEALIGKKFQNCIDSFHSRNNSKTIPTRECKALKQRPRFVALKKQPAYLGGESLELRDYQLEGLNWLAHSWCKSNSVILADEMGLGKTIQTISFLSYLFHQHQLYGPFLIVVPLSTLTSWQREFEIWAPEINVVVYIGDLMSRNTIREYEWIHSQTKRLKFNALITTYEILLKDKTVLGSINWAFLGVDEAHRLKNDDSLLYKTLIDFKSNHRLLITGTPLQNSLKELWSLLHFIMPEKFEFWEDFEEDHGKGRENGYQSLHKVLEPFLLRRVKKDVEKSLPAKVEQILRVEMSALQKQYYKWILTRNYKALAKGTRGSTSGFLNIVMELKKCCNHCYLIKAPEDSERESGQEVLQSLIRSSGKLILLDKLLTRLRERGNRVLIFSQMVRMLDILAEYLTIKHYPFQRLDGSIKGEIRKQALDHFNADGSEDFCFLLSTRAGGLGINLASADTVVIFDSDWNPQNDLQAQARAHRIGQKKQVNIYRLVTKGTVEEEIIERAKKKMVLDHLVIQRMDTTGRTVLENNSGRSNSNPFNKEELTAILKFGAEDLFKEIEGEESEPQEMDIDEILRLAETRENEVSTSATDELLSQFKVANFATMEDEEELEERPHKDWDEIIPEEQRKKVEEEERQKELEEIYMLPRIRSSTKKAQTNDSDSDTESKRQAQRSSASESETDDSDDDKKPKRRGRPRSVRKDLVEGFTDAEIRRFIKAYKKFGLPLERLECIARDAELVDKSVADLKRLGELIHNSCVSAMQEYEEQLKESTSEGKGPGKRRGPTIKISGVQVNVKSIIQHEEEFEMLHKSIPVDPEEKKKYCLTCRVKAAHFDVEWGVEDDSRLLLGIYEHGYGNWELIKTDPELKLTDKILPVETDKKPQGKQLQTRVDYLLKLLRKGLEKKGTVASGEEAKLKKRKPRVKKENKAPRLKDEHGLEPASPRHSDNPSEEGEVKDDGLEKSPTKKKQKKKENKENKEKPVSSRKDREGDKERKKSKDKKEKVKGGDGKSSSKSKRSQGPVHITAGSEPVPIGEDEDDDLDQETFSICKERMRPVKKALKQLDKPDKGLSVQEQLEHTRNCLLKIGDRIAECLKAYSDQEHIKLWRRNLWIFVSKFTEFDARKLHKLYKMAHKKRSQEEEEQKKKDDSLGGKKPFRPEASGSSRDSLISQSHTSHNLHPQKPHLPASHGPQMHGHPRDNYSHPNKRHFSNADRGDWQRERKFNYGGGNSAPWGGDRHHQYEQHWYKDHHYGDRRHMDAHRSGSYRPNNMSRKRPYEQYNSDRDHRGHRDYYDRHHHDSKRRRSDDFRPQNYHQQDFRRMSDHRPTMGYHGQGPSDHYRSFHTDKLGEYKQPMPSLHTALSDPRSPPSQKSPHDSKSPLDHRSPLERSLEQKNNPDYNWNVRKT.

Basic and acidic residues predominate over residues 1 to 14 (MMRNKDKSQEEDSS). A disordered region spans residues 1 to 264 (MMRNKDKSQE…EQQDNSETIE (264 aa)). Residues 15 to 75 (LHSNASSRSA…SESESAGSKS (61 aa)) show a composition bias toward low complexity. 3 stretches are compositionally biased toward basic and acidic residues: residues 81 to 101 (EAKEKPASKKERIADVKKMWE), 115 to 128 (SRQEPSRFNVKEEA), and 146 to 155 (KKQEKWKQDP). A compositionally biased stretch (basic residues) spans 175–204 (GKARRPVPRRTVPKPQVKKQPKIQRGKRKK). Phosphoserine occurs at positions 207 and 208. Positions 234-258 (EDDDFETDSDDLIEMTGEGGDEQQD) are enriched in acidic residues. Thr240 is subject to Phosphothreonine. At Ser242 the chain carries Phosphoserine. Chromo domains lie at 261–353 (ETIE…QWLG) and 378–456 (QIVE…IPTR). The Helicase ATP-binding domain occupies 496–666 (AHSWCKSNSV…WSLLHFIMPE (171 aa)). Position 509–516 (509–516 (DEMGLGKT)) interacts with ATP. The DEAH box signature appears at 617 to 620 (DEAH). A Helicase C-terminal domain is found at 795–946 (LLDKLLTRLR…HLVIQRMDTT (152 aa)). 4 disordered regions span residues 1030–1124 (EDEE…RSVR), 1329–1465 (GTVA…DDLD), 1556–1638 (HKKR…ADRG), and 1679–1827 (HMDA…VRKT). A compositionally biased stretch (basic and acidic residues) spans 1037–1065 (ERPHKDWDEIIPEEQRKKVEEEERQKELE). Phosphoserine is present on residues Ser1085, Ser1087, Ser1365, and Ser1386. Positions 1347–1371 (KKENKAPRLKDEHGLEPASPRHSDN) are enriched in basic and acidic residues. Basic and acidic residues-rich tracts occupy residues 1396-1431 (ENKENKEKPVSSRKDREGDKERKKSKDKKEKVKGGD) and 1565-1574 (EQKKKDDSLG). Positions 1464–1566 (LDQETFSICK…KKRSQEEEEQ (103 aa)) are CHD1 helical C-terminal domain (CHCT). Residues 1584 to 1601 (SGSSRDSLISQSHTSHNL) show a composition bias toward polar residues. 4 stretches are compositionally biased toward basic and acidic residues: residues 1697-1719 (RPYEQYNSDRDHRGHRDYYDRHH), 1738-1748 (QDFRRMSDHRP), 1759-1771 (DHYRSFHTDKLGE), and 1794-1813 (SPHDSKSPLDHRSPLERSLE). A Phosphoserine modification is found at Ser1806.

In terms of assembly, interacts with MYOD1. Interacts with histone H3.3. As to expression, widely expressed.

Its subcellular location is the nucleus. The enzyme catalyses ATP + H2O = ADP + phosphate + H(+). In terms of biological role, ATP-dependent chromatin-remodeling factor that specifically binds to the promoter of target genes, leading to chromatin remodeling, possibly by promoting deposition of histone H3.3. Involved in myogenesis via interaction with MYOD1: binds to myogenic gene regulatory sequences and mediates incorporation of histone H3.3 prior to the onset of myogenic gene expression, promoting their expression. In Mus musculus (Mouse), this protein is Chromodomain-helicase-DNA-binding protein 2 (Chd2).